Here is a 494-residue protein sequence, read N- to C-terminus: BTB/POZ domain and ankyrin repeat-containing protein NH5.1 (494 aa).

Residues 25–130 (SDVAFSVEGR…LYSGQASVAA (106 aa)) form the BTB domain. The segment at 60-94 (NHQPPPPPPPLNWPMAGGGGGGSGGGGRGGAGGGG) is disordered. Positions 61-71 (HQPPPPPPPLN) are enriched in pro residues. A compositionally biased stretch (gly residues) spans 75–94 (AGGGGGGSGGGGRGGAGGGG). The C2HC NPR-type zinc finger occupies 136 to 150 (LPGCGARGCWHTRCG). The Zn(2+) site is built by C139, C144, H146, and C149. ANK repeat units follow at residues 274 to 302 (NKIR…GLDL), 303 to 333 (DDAL…DVNS), 338 to 367 (TGKT…DPNS), and 371 to 405 (DGVT…KLRL). Disordered stretches follow at residues 421-443 (DGAP…PRSD) and 469-494 (AAGE…NGFA).

Belongs to the plant 'ANKYRIN-BTB/POZ' family. 'NOOT-BOP-COCH-like' (NBCL) subfamily. Homodimer. Interacts with TGAL5, TGAL7, TGAL8 and TGAL9.

The protein resides in the nucleus. Its subcellular location is the cytoplasm. It functions in the pathway protein modification; protein ubiquitination. May act as a substrate-specific adapter of an E3 ubiquitin-protein ligase complex (CUL3-RBX1-BTB) which mediates the ubiquitination and subsequent proteasomal degradation of target proteins. Transcriptional co-regulator involved in the promotion of leaf and floral meristem fate and determinacy. Required for the abscission of senescent organs, probably by regulating the cell wall disorganization in abscission zones (AZs, e.g. pulvini at the base of leaves). In Oryza sativa subsp. japonica (Rice), this protein is BTB/POZ domain and ankyrin repeat-containing protein NH5.1.